Consider the following 201-residue polypeptide: Holliday junction branch migration complex subunit RuvA (201 aa).

The domain I stretch occupies residues Met1–Ala63. Positions Asp64 to Ser142 are domain II. The segment at Ala143–Ser151 is flexible linker. The segment at Ala152 to Leu201 is domain III.

The protein belongs to the RuvA family. Homotetramer. Forms an RuvA(8)-RuvB(12)-Holliday junction (HJ) complex. HJ DNA is sandwiched between 2 RuvA tetramers; dsDNA enters through RuvA and exits via RuvB. An RuvB hexamer assembles on each DNA strand where it exits the tetramer. Each RuvB hexamer is contacted by two RuvA subunits (via domain III) on 2 adjacent RuvB subunits; this complex drives branch migration. In the full resolvosome a probable DNA-RuvA(4)-RuvB(12)-RuvC(2) complex forms which resolves the HJ.

Its subcellular location is the cytoplasm. In terms of biological role, the RuvA-RuvB-RuvC complex processes Holliday junction (HJ) DNA during genetic recombination and DNA repair, while the RuvA-RuvB complex plays an important role in the rescue of blocked DNA replication forks via replication fork reversal (RFR). RuvA specifically binds to HJ cruciform DNA, conferring on it an open structure. The RuvB hexamer acts as an ATP-dependent pump, pulling dsDNA into and through the RuvAB complex. HJ branch migration allows RuvC to scan DNA until it finds its consensus sequence, where it cleaves and resolves the cruciform DNA. The polypeptide is Holliday junction branch migration complex subunit RuvA (Bacteroides thetaiotaomicron (strain ATCC 29148 / DSM 2079 / JCM 5827 / CCUG 10774 / NCTC 10582 / VPI-5482 / E50)).